We begin with the raw amino-acid sequence, 114 residues long: Protein ORF3 (114 aa).

The interval 1 to 28 (MGSRPCALGLFCCCSSCFCLCCPRHRPV) is membrane association. 2 hydrophobic regions span residues 6–22 (CALG…CLCC) and 33–53 (AAVG…GLIL). The segment at 6 to 22 (CALGLFCCCSSCFCLCC) is induction of host SIRPA expression. Residues 28 to 68 (VSRLAAAVGGAAAVPAVVSGVTGLILSPSQSPIFIQPTPSP) are interaction with host HPX. The interval 48–72 (VTGLILSPSQSPIFIQPTPSPPMSP) is interaction with the capsid protein. Ser-71 carries the phosphoserine; by host modification. Residues 72–114 (PLRPGLDLVFANPPDHSAPLGVTRPSAPPLPHVVDLPQLGPRR) are homodimerization, and interaction with host AMBP/bikunin. The disordered stretch occupies residues 91–114 (LGVTRPSAPPLPHVVDLPQLGPRR). Residues 95-104 (RPSAPPLPHV) are interaction with host SRC, HCK, FYN, PIK3R3 and GRB2. The PTAP/PSAP motif signature appears at 96–99 (PSAP).

It belongs to the hepevirus ORF3 protein family. As to quaternary structure, forms homooligomers. Interacts with host SRC, HCK, FYN, PIK3R3 and GRB2 (via SH3 domain); binding does not activate the kinases. Interacts with host AMBP/bikunin and AMBP/alpha-1-microglobulin peptides. Interacts with host HPX/hemopexin. Interacts (when phosphorylated) with capsid protein ORF2. Interacts with host TSG101; this interaction plays a role in viral release from the host cell. Interacts with host SIRPA; this interaction down-regulates the phosphorylation of host IRF3. Palmitoylated in the N-terminus.

It is found in the host endoplasmic reticulum membrane. The protein resides in the host cytoplasm. It localises to the host cytoskeleton. The protein localises to the virion. Its subcellular location is the host cell membrane. Its function is as follows. Small multifunctional phosphoprotein involved in virion morphogenesis, egress and counteracting host innate immunity. Plays critical roles in the final steps of viral release by interacting with host TSG101, a member of the vacuolar protein-sorting pathway and using other cellular host proteins involved in vesicle formation pathway. Also acts as a viroporin and forms ion conductive pores allowing viral particle release. Impairs the generation of type I interferon by down-regulating host TLR3 and TLR7 as well as their downstream signaling pathways. Down-regulates the phosphorylation of host IRF3 via the interaction with host SIRP-alpha, thereby inhibiting IFN-I expression. Interacts with host microtubules. The chain is Protein ORF3 from Hepatitis E virus genotype 1 (isolate Human/China/HeBei/1987) (HEV).